Reading from the N-terminus, the 395-residue chain is ETS-related transcription factor Elf-3 (395 aa).

The region spanning 69–155 (EPPAVLHLAE…AQLRDLTSSS (87 aa)) is the PNT domain. Residues 200-240 (ASPYYGSSYGPGAPSPGSSDFSTSGTDTPQSSHSSDSGGSD) show a composition bias toward low complexity. Positions 200–275 (ASPYYGSSYG…HGKRKRGRPR (76 aa)) are disordered. Basic and acidic residues predominate over residues 246 to 265 (TDSKVFPRDGFPDYKKGEPK). Basic residues predominate over residues 266–275 (HGKRKRGRPR). A DNA-binding region (ETS) is located at residues 297 to 379 (THLWEFIRDI…DGRRLVYKFG (83 aa)).

This sequence belongs to the ETS family. In terms of assembly, interacts with TBP. Interacts with CREBBP and EP300; these act as transcriptional coactivators of ELF3 and positively modulate its function. Interacts with XRCC5/KU86 and XRCC6/KU70; these inhibit the ability of ELF3 to bind DNA and negatively modulate its transcriptional activity. Associated with CLND7 and POU2F3. Interacts with ZNF768.

Its subcellular location is the cytoplasm. The protein resides in the nucleus. In terms of biological role, transcriptional activator that binds and transactivates ETS sequences containing the consensus nucleotide core sequence GGA[AT]. Acts synergistically with POU2F3 to transactivate the SPRR2A promoter and with RUNX1 to transactivate the ANGPT1 promoter. Also transactivates collagenase, CCL20, CLND7, FLG, KRT8, NOS2, PTGS2, SPRR2B, TGFBR2 and TGM3 promoters. Represses KRT4 promoter activity. Involved in mediating vascular inflammation. May play an important role in epithelial cell differentiation and tumorigenesis. May be a critical downstream effector of the ERBB2 signaling pathway. May be associated with mammary gland development and involution. Plays an important role in the regulation of transcription with TATA-less promoters in preimplantation embryos, which is essential in preimplantation development. The protein is ETS-related transcription factor Elf-3 of Rattus norvegicus (Rat).